Consider the following 336-residue polypeptide: Type II methyltransferase M.PvuII (336 aa).

Repeat copies occupy residues 11–113 and 181–293. The tract at residues 196–215 is disordered; the sequence is TPKTRPSGHDIGKSFSKDNG. The span at 202–211 shows a compositional bias: basic and acidic residues; the sequence is SGHDIGKSFS.

This sequence belongs to the N(4)/N(6)-methyltransferase family. N(4) subfamily. Monomer.

It catalyses the reaction a 2'-deoxycytidine in DNA + S-adenosyl-L-methionine = an N(4)-methyl-2'-deoxycytidine in DNA + S-adenosyl-L-homocysteine + H(+). Its function is as follows. A beta subtype methylase, recognizes the double-stranded sequence 5'-CAGCTG-3', methylates C-4 on both strands, and protects the DNA from cleavage by the PvuII endonuclease. In Proteus hauseri, this protein is Type II methyltransferase M.PvuII.